A 185-amino-acid polypeptide reads, in one-letter code: Ribosome-recycling factor (185 aa).

It belongs to the RRF family.

Its subcellular location is the cytoplasm. Its function is as follows. Responsible for the release of ribosomes from messenger RNA at the termination of protein biosynthesis. May increase the efficiency of translation by recycling ribosomes from one round of translation to another. The polypeptide is Ribosome-recycling factor (Aromatoleum aromaticum (strain DSM 19018 / LMG 30748 / EbN1) (Azoarcus sp. (strain EbN1))).